We begin with the raw amino-acid sequence, 630 residues long: tRNA uridine 5-carboxymethylaminomethyl modification enzyme MnmG (630 aa).

FAD is bound at residue 13-18 (GGGHAG). 273-287 (GPRYCPSIEDKIHRF) lines the NAD(+) pocket.

It belongs to the MnmG family. In terms of assembly, homodimer. Heterotetramer of two MnmE and two MnmG subunits. FAD is required as a cofactor.

Its subcellular location is the cytoplasm. In terms of biological role, NAD-binding protein involved in the addition of a carboxymethylaminomethyl (cmnm) group at the wobble position (U34) of certain tRNAs, forming tRNA-cmnm(5)s(2)U34. In Pseudomonas putida (strain ATCC 700007 / DSM 6899 / JCM 31910 / BCRC 17059 / LMG 24140 / F1), this protein is tRNA uridine 5-carboxymethylaminomethyl modification enzyme MnmG.